Reading from the N-terminus, the 600-residue chain is MEQKNVRNFCIIAHVDHGKSTLADRLLEYTGAISEREKREQLLDTLDVERERGITVKMQAVRMFYKAKDGNTYKLHLIDTPGHVDFSYEVSRALAACEGALLLIDASQGIEAQTVANFWKAVEQDLVIIPVINKIDLPSADVDRVKKQIEEVLGLDPEEAILASAKEGIGIEEILEAIVNRIPPPKGDPQKPLKALIFDSYYDPYRGAVAFVRIFDGEVKPGDKIMLMSTGKEYEVTEVGAQTPKMTKFDKLSAGDVGYIAASIKDVRDIRIGDTITHAKNPTKEPVPGFQPAKPMVYAGIYPAEDTTYEELRDALEKYAINDAAIVYEPESSPALGMGFRVGFLGLLHMEIVQERLEREYGVKIITTAPNVIYRVKKKFTDEVIEVRNPMDFPDNAGLIEYVEEPFVLVTIITPKEYVGPIIQLCQEKRGIQKNMTYLDPNTVYLEYEMPLSEIIVDFHDKIKSISRGFASYDYEFIGYRPSDLIKLTVLINKKPVDALSFIVHADRAQKFARRVAEKLRETIPRQLFEVHIQVAKGGKVIASERIKPLRANVTAKCYGGDVTRKKKLLENQKEGKKRMKQFGKVQLPQEAFLSVLKVE.

In terms of domain architecture, tr-type G spans 4–186 (KNVRNFCIIA…AIVNRIPPPK (183 aa)). Residues 16–21 (DHGKST) and 133–136 (NKID) each bind GTP.

Belongs to the TRAFAC class translation factor GTPase superfamily. Classic translation factor GTPase family. LepA subfamily.

Its subcellular location is the cell inner membrane. The catalysed reaction is GTP + H2O = GDP + phosphate + H(+). Required for accurate and efficient protein synthesis under certain stress conditions. May act as a fidelity factor of the translation reaction, by catalyzing a one-codon backward translocation of tRNAs on improperly translocated ribosomes. Back-translocation proceeds from a post-translocation (POST) complex to a pre-translocation (PRE) complex, thus giving elongation factor G a second chance to translocate the tRNAs correctly. Binds to ribosomes in a GTP-dependent manner. This chain is Elongation factor 4, found in Aquifex aeolicus (strain VF5).